Consider the following 214-residue polypeptide: DNA-directed RNA polymerase subunit alpha (214 aa).

Belongs to the RNA polymerase alpha chain family. As to quaternary structure, in plastids the minimal PEP RNA polymerase catalytic core is composed of four subunits: alpha, beta, beta', and beta''. When a (nuclear-encoded) sigma factor is associated with the core the holoenzyme is formed, which can initiate transcription.

It localises to the plastid. It is found in the chloroplast. The enzyme catalyses RNA(n) + a ribonucleoside 5'-triphosphate = RNA(n+1) + diphosphate. Its function is as follows. DNA-dependent RNA polymerase catalyzes the transcription of DNA into RNA using the four ribonucleoside triphosphates as substrates. The chain is DNA-directed RNA polymerase subunit alpha (rpoA) from Euglena viridis (Cercaria viridis).